Reading from the N-terminus, the 221-residue chain is Ribosomal RNA small subunit methyltransferase G (221 aa).

Residues G85, F90, 136–137, and R149 contribute to the S-adenosyl-L-methionine site; that span reads AE.

It belongs to the methyltransferase superfamily. RNA methyltransferase RsmG family.

It is found in the cytoplasm. In terms of biological role, specifically methylates the N7 position of a guanine in 16S rRNA. In Porphyromonas gingivalis (strain ATCC BAA-308 / W83), this protein is Ribosomal RNA small subunit methyltransferase G.